The primary structure comprises 217 residues: ATP-dependent Clp protease proteolytic subunit (217 aa).

Ser-121 (nucleophile) is an active-site residue. His-146 is an active-site residue.

This sequence belongs to the peptidase S14 family. Fourteen ClpP subunits assemble into 2 heptameric rings which stack back to back to give a disk-like structure with a central cavity, resembling the structure of eukaryotic proteasomes.

It localises to the cytoplasm. It carries out the reaction Hydrolysis of proteins to small peptides in the presence of ATP and magnesium. alpha-casein is the usual test substrate. In the absence of ATP, only oligopeptides shorter than five residues are hydrolyzed (such as succinyl-Leu-Tyr-|-NHMec, and Leu-Tyr-Leu-|-Tyr-Trp, in which cleavage of the -Tyr-|-Leu- and -Tyr-|-Trp bonds also occurs).. Cleaves peptides in various proteins in a process that requires ATP hydrolysis. Has a chymotrypsin-like activity. Plays a major role in the degradation of misfolded proteins. The sequence is that of ATP-dependent Clp protease proteolytic subunit from Burkholderia vietnamiensis (strain G4 / LMG 22486) (Burkholderia cepacia (strain R1808)).